Here is a 270-residue protein sequence, read N- to C-terminus: Putative carbamate hydrolase RutD (270 aa).

Belongs to the AB hydrolase superfamily. Hydrolase RutD family.

The enzyme catalyses carbamate + 2 H(+) = NH4(+) + CO2. Involved in pyrimidine catabolism. May facilitate the hydrolysis of carbamate, a reaction that can also occur spontaneously. This chain is Putative carbamate hydrolase RutD, found in Escherichia coli O44:H18 (strain 042 / EAEC).